The chain runs to 138 residues: Phospholipase A2 homolog (138 aa).

Residues 1 to 16 (MRALWIVAVWLIGVEG) form the signal peptide. 7 cysteine pairs are disulfide-bonded: Cys42–Cys131, Cys44–Cys60, Cys59–Cys111, Cys65–Cys138, Cys66–Cys104, Cys73–Cys97, and Cys91–Cys102. Residues 121 to 133 (KKYTYYPNFLCKG) are important for membrane-damaging activities in eukaryotes and bacteria; heparin-binding.

This sequence belongs to the phospholipase A2 family. Group II subfamily. S49 sub-subfamily. In terms of assembly, monomer. Expressed by the venom gland.

The protein resides in the secreted. Snake venom phospholipase A2 homolog that lacks enzymatic activity. Shows high myotoxin activities and displays edema-inducing activities. Has cytotoxic activities against HUVEC cells (LC(50)=5.0 uL) and human lung adenocarcinoma A549 cells (LC(50)=5.2 uL). The protein is Phospholipase A2 homolog of Echis ocellatus (Ocellated saw-scaled viper).